Consider the following 245-residue polypeptide: 6-carboxyhexanoate--CoA ligase (245 aa).

The protein belongs to the BioW family. Homodimer. Mg(2+) is required as a cofactor.

The catalysed reaction is heptanedioate + ATP + CoA = 6-carboxyhexanoyl-CoA + AMP + diphosphate. Its pathway is metabolic intermediate metabolism; pimeloyl-CoA biosynthesis; pimeloyl-CoA from pimelate: step 1/1. Its function is as follows. Catalyzes the transformation of pimelate into pimeloyl-CoA with concomitant hydrolysis of ATP to AMP. The polypeptide is 6-carboxyhexanoate--CoA ligase (Sulfurihydrogenibium sp. (strain YO3AOP1)).